Here is a 290-residue protein sequence, read N- to C-terminus: MNPLANRLAVKMNGIGNEILIVDLRGAGAGVTGPQARAIARTKGLAFDQLMVLEDPRSKGCAAFVTIFNADGSQSAACGNGTRCVAWTLLKDGARDEVLLETAAGRLACRRVSELVFSVEMGRPRLKAAEIPLSRDAPDTSAVDLSFGPADSPILKNPAVVNMGNPHAIFFVEDIGAYDLAAIGPVLEHDPLFPERANISLARIVSPERIELKVWERGVGLTLACGSAACAALVAAARRGLTGRRATVALPGGELDIFWRESDDMVVMTGPVAFEFETRLDPAIFADAAA.

Residues Asn17, Gln49, and Asn69 each coordinate substrate. The Proton donor role is filled by Cys78. Residues 79 to 80, Asn165, Asn198, and 216 to 217 contribute to the substrate site; these read GN and ER. Catalysis depends on Cys225, which acts as the Proton acceptor. Residue 226-227 participates in substrate binding; that stretch reads GS.

Belongs to the diaminopimelate epimerase family. As to quaternary structure, homodimer.

It localises to the cytoplasm. The enzyme catalyses (2S,6S)-2,6-diaminopimelate = meso-2,6-diaminopimelate. Its pathway is amino-acid biosynthesis; L-lysine biosynthesis via DAP pathway; DL-2,6-diaminopimelate from LL-2,6-diaminopimelate: step 1/1. Functionally, catalyzes the stereoinversion of LL-2,6-diaminopimelate (L,L-DAP) to meso-diaminopimelate (meso-DAP), a precursor of L-lysine and an essential component of the bacterial peptidoglycan. This is Diaminopimelate epimerase from Methylocella silvestris (strain DSM 15510 / CIP 108128 / LMG 27833 / NCIMB 13906 / BL2).